We begin with the raw amino-acid sequence, 86 residues long: Large ribosomal subunit protein bL31B (86 aa).

Belongs to the bacterial ribosomal protein bL31 family. Type B subfamily. In terms of assembly, part of the 50S ribosomal subunit.

The polypeptide is Large ribosomal subunit protein bL31B (Streptococcus pyogenes serotype M1).